A 701-amino-acid chain; its full sequence is Glycine--tRNA ligase beta subunit (701 aa).

It belongs to the class-II aminoacyl-tRNA synthetase family. Tetramer of two alpha and two beta subunits.

The protein localises to the cytoplasm. It carries out the reaction tRNA(Gly) + glycine + ATP = glycyl-tRNA(Gly) + AMP + diphosphate. The chain is Glycine--tRNA ligase beta subunit from Anaeromyxobacter dehalogenans (strain 2CP-1 / ATCC BAA-258).